The sequence spans 351 residues: Sesquiterpene synthase 14 (351 aa).

Mg(2+) contacts are provided by D87, N223, S227, and E231. The DDXXD motif motif lies at 87 to 91 (DEYTD). The NSE/DTE motif motif lies at 223–231 (NDIASYNKE). (2E,6E)-farnesyl diphosphate contacts are provided by R312 and Y313.

The protein belongs to the terpene synthase family. The cofactor is Mg(2+).

The catalysed reaction is (2E,6E)-farnesyl diphosphate = pentalenene + diphosphate. In terms of biological role, terpene cyclase that catalyzes the cyclization of farnesyl diphosphate (FPP) to pentalenene as a major product, as well as caryophyllene. This chain is Sesquiterpene synthase 14, found in Postia placenta (strain ATCC 44394 / Madison 698-R) (Brown rot fungus).